The chain runs to 208 residues: Sec-independent protein translocase protein TatB (208 aa).

The helical transmembrane segment at 1-21 (MFDIGVGELTLIAVVALVVLG) threads the bilayer. Residues 178–189 (APEPVAVAPVDA) are compositionally biased toward low complexity. The interval 178-208 (APEPVAVAPVDAGTPAAWTPSAPAKLQEKQP) is disordered.

The protein belongs to the TatB family. In terms of assembly, the Tat system comprises two distinct complexes: a TatABC complex, containing multiple copies of TatA, TatB and TatC subunits, and a separate TatA complex, containing only TatA subunits. Substrates initially bind to the TatABC complex, which probably triggers association of the separate TatA complex to form the active translocon.

The protein localises to the cell inner membrane. Its function is as follows. Part of the twin-arginine translocation (Tat) system that transports large folded proteins containing a characteristic twin-arginine motif in their signal peptide across membranes. Together with TatC, TatB is part of a receptor directly interacting with Tat signal peptides. TatB may form an oligomeric binding site that transiently accommodates folded Tat precursor proteins before their translocation. In Xanthomonas euvesicatoria pv. vesicatoria (strain 85-10) (Xanthomonas campestris pv. vesicatoria), this protein is Sec-independent protein translocase protein TatB.